Consider the following 187-residue polypeptide: Threonylcarbamoyl-AMP synthase (187 aa).

Positions 3 to 187 (NSELLKIIWA…LLNGYLYRKR (185 aa)) constitute a YrdC-like domain.

The protein belongs to the SUA5 family. TsaC subfamily.

The protein localises to the cytoplasm. It catalyses the reaction L-threonine + hydrogencarbonate + ATP = L-threonylcarbamoyladenylate + diphosphate + H2O. Its function is as follows. Required for the formation of a threonylcarbamoyl group on adenosine at position 37 (t(6)A37) in tRNAs that read codons beginning with adenine. Catalyzes the conversion of L-threonine, HCO(3)(-)/CO(2) and ATP to give threonylcarbamoyl-AMP (TC-AMP) as the acyladenylate intermediate, with the release of diphosphate. This Riesia pediculicola (strain USDA) protein is Threonylcarbamoyl-AMP synthase.